The following is a 448-amino-acid chain: Glutamate--tRNA ligase 1 (448 aa).

Residues 9–19 carry the 'HIGH' region motif; sequence PSPTGKLHIGN. The 'KMSKS' region signature appears at 240-244; the sequence is KISKR. Lysine 243 lines the ATP pocket.

Belongs to the class-I aminoacyl-tRNA synthetase family. Glutamate--tRNA ligase type 1 subfamily. Monomer.

The protein resides in the cytoplasm. It catalyses the reaction tRNA(Glu) + L-glutamate + ATP = L-glutamyl-tRNA(Glu) + AMP + diphosphate. Functionally, catalyzes the attachment of glutamate to tRNA(Glu) in a two-step reaction: glutamate is first activated by ATP to form Glu-AMP and then transferred to the acceptor end of tRNA(Glu). The chain is Glutamate--tRNA ligase 1 from Orientia tsutsugamushi (strain Ikeda) (Rickettsia tsutsugamushi).